A 487-amino-acid polypeptide reads, in one-letter code: N-succinylglutamate 5-semialdehyde dehydrogenase (487 aa).

The segment at 1–23 (MTHFIKGQWHTGKGHDVASSNPA) is disordered. Residue 220-225 (GSSRTG) participates in NAD(+) binding. Active-site residues include glutamate 243 and cysteine 277.

This sequence belongs to the aldehyde dehydrogenase family. AstD subfamily.

The enzyme catalyses N-succinyl-L-glutamate 5-semialdehyde + NAD(+) + H2O = N-succinyl-L-glutamate + NADH + 2 H(+). It participates in amino-acid degradation; L-arginine degradation via AST pathway; L-glutamate and succinate from L-arginine: step 4/5. In terms of biological role, catalyzes the NAD-dependent reduction of succinylglutamate semialdehyde into succinylglutamate. The sequence is that of N-succinylglutamate 5-semialdehyde dehydrogenase from Shewanella oneidensis (strain ATCC 700550 / JCM 31522 / CIP 106686 / LMG 19005 / NCIMB 14063 / MR-1).